A 50-amino-acid polypeptide reads, in one-letter code: Sperm protamine P1 (50 aa).

This sequence belongs to the protamine P1 family. As to expression, testis.

The protein localises to the nucleus. The protein resides in the chromosome. In terms of biological role, protamines substitute for histones in the chromatin of sperm during the haploid phase of spermatogenesis. They compact sperm DNA into a highly condensed, stable and inactive complex. This is Sperm protamine P1 (PRM1) from Trachypithecus vetulus (Purple-faced langur).